The primary structure comprises 245 residues: Ribosomal RNA small subunit methyltransferase G (245 aa).

Residues Gly85, Phe90, 108-110 (DST), 136-137 (AE), and Arg155 each bind S-adenosyl-L-methionine.

The protein belongs to the methyltransferase superfamily. RNA methyltransferase RsmG family.

The protein localises to the cytoplasm. Functionally, specifically methylates the N7 position of a guanine in 16S rRNA. The protein is Ribosomal RNA small subunit methyltransferase G of Nostoc sp. (strain PCC 7120 / SAG 25.82 / UTEX 2576).